The following is a 256-amino-acid chain: Gramicidin S biosynthesis protein GrsT (256 aa).

The active site involves S95.

The protein belongs to the thioesterase family.

It functions in the pathway antibiotic biosynthesis; gramicidin S biosynthesis. Probable thioesterase involved in the biosynthesis of gramicidin S. This is Gramicidin S biosynthesis protein GrsT (grsT) from Aneurinibacillus migulanus (Bacillus migulanus).